A 151-amino-acid chain; its full sequence is uncharacterized protein (151 aa).

This is an uncharacterized protein from Rhizobium meliloti (strain 1021) (Ensifer meliloti).